The sequence spans 264 residues: Teichoic acids export ATP-binding protein TagH (264 aa).

One can recognise an ABC transporter domain in the interval 24 to 243; the sequence is IKDALIPKNK…YEQFLKDFKK (220 aa). 57-64 lines the ATP pocket; the sequence is GINGSGKS.

The protein belongs to the ABC transporter superfamily. Teichoic acids exporter (TC 3.A.1.104.1) family. The complex is composed of two ATP-binding proteins (TagH) and two transmembrane proteins (TagG).

The protein resides in the cell membrane. The catalysed reaction is ATP + H2O + teichoic acidSide 1 = ADP + phosphate + teichoic acidSide 2.. Part of the ABC transporter complex TagGH involved in teichoic acids export. Responsible for energy coupling to the transport system. The polypeptide is Teichoic acids export ATP-binding protein TagH (Staphylococcus haemolyticus (strain JCSC1435)).